A 339-amino-acid polypeptide reads, in one-letter code: MRVYYDRDADIGLIKTKKVAIVGYGSQGHAHAQNLQDSGVADVAIALRPGSATAKKAEGAGFKVLSNADAAKWADIVMILAPDEHQAAIYNDDLRDNLKPGAALAFAHGLNVHFGLIEPRADIDVFMIAPKGPGHTVRSEYQRGGGVPCLIAIAQDASGNAHDVALSYASAIGGGRSGVIETTFKEECETDLFGEQAVLCGGLSHLIMAGFETLVEAGYAPEMAYFECLHEVKLIVDLMYEGGIANMRYSISNTAEYGDIHTGPRVITSETKAEMKRVLDDIQKGKFVKRFVLDNRAGQPELKASRKLVAEHPIEKVGAELRAMMPWISKNQLVDKAKN.

Residues M1–T182 form the KARI N-terminal Rossmann domain. NADP(+) is bound by residues Y24–Q27, R48, S51, T53, and D83–Q86. The active site involves H108. G134 is an NADP(+) binding site. The region spanning T183–I328 is the KARI C-terminal knotted domain. Residues D191, E195, E227, and E231 each coordinate Mg(2+). S252 serves as a coordination point for substrate.

It belongs to the ketol-acid reductoisomerase family. Requires Mg(2+) as cofactor.

It catalyses the reaction (2R)-2,3-dihydroxy-3-methylbutanoate + NADP(+) = (2S)-2-acetolactate + NADPH + H(+). The enzyme catalyses (2R,3R)-2,3-dihydroxy-3-methylpentanoate + NADP(+) = (S)-2-ethyl-2-hydroxy-3-oxobutanoate + NADPH + H(+). Its pathway is amino-acid biosynthesis; L-isoleucine biosynthesis; L-isoleucine from 2-oxobutanoate: step 2/4. It functions in the pathway amino-acid biosynthesis; L-valine biosynthesis; L-valine from pyruvate: step 2/4. Its function is as follows. Involved in the biosynthesis of branched-chain amino acids (BCAA). Catalyzes an alkyl-migration followed by a ketol-acid reduction of (S)-2-acetolactate (S2AL) to yield (R)-2,3-dihydroxy-isovalerate. In the isomerase reaction, S2AL is rearranged via a Mg-dependent methyl migration to produce 3-hydroxy-3-methyl-2-ketobutyrate (HMKB). In the reductase reaction, this 2-ketoacid undergoes a metal-dependent reduction by NADPH to yield (R)-2,3-dihydroxy-isovalerate. The chain is Ketol-acid reductoisomerase (NADP(+)) from Rhizorhabdus wittichii (strain DSM 6014 / CCUG 31198 / JCM 15750 / NBRC 105917 / EY 4224 / RW1) (Sphingomonas wittichii).